Consider the following 453-residue polypeptide: Ribulose bisphosphate carboxylase large chain (453 aa).

A propeptide spanning residues 1–2 is cleaved from the precursor; it reads MS. An N-acetylproline modification is found at P3. K14 carries the post-translational modification N6,N6,N6-trimethyllysine. Substrate-binding residues include N123 and T173. Catalysis depends on K175, which acts as the Proton acceptor. Residue K177 coordinates substrate. K201, D203, and E204 together coordinate Mg(2+). K201 bears the N6-carboxylysine mark. The active-site Proton acceptor is the H294. R295, H327, and S379 together coordinate substrate.

This sequence belongs to the RuBisCO large chain family. Type I subfamily. In terms of assembly, heterohexadecamer of 8 large chains and 8 small chains; disulfide-linked. The disulfide link is formed within the large subunit homodimers. Requires Mg(2+) as cofactor. In terms of processing, the disulfide bond which can form in the large chain dimeric partners within the hexadecamer appears to be associated with oxidative stress and protein turnover.

It is found in the plastid. It localises to the chloroplast. It catalyses the reaction 2 (2R)-3-phosphoglycerate + 2 H(+) = D-ribulose 1,5-bisphosphate + CO2 + H2O. The enzyme catalyses D-ribulose 1,5-bisphosphate + O2 = 2-phosphoglycolate + (2R)-3-phosphoglycerate + 2 H(+). In terms of biological role, ruBisCO catalyzes two reactions: the carboxylation of D-ribulose 1,5-bisphosphate, the primary event in carbon dioxide fixation, as well as the oxidative fragmentation of the pentose substrate in the photorespiration process. Both reactions occur simultaneously and in competition at the same active site. The sequence is that of Ribulose bisphosphate carboxylase large chain from Galium album (White bedstraw).